Here is a 380-residue protein sequence, read N- to C-terminus: Fibromodulin (380 aa).

The N-terminal stretch at 1-18 (MRWANILLVAGLCRASLG) is a signal peptide. The 39-residue stretch at 71–109 (EAQQASSWQCPQECDCPPNFSSAMYCDTRNLRYLPFVPT) folds into the LRRNT domain. Residue Asn-89 is glycosylated (N-linked (GlcNAc...) asparagine). LRR repeat units follow at residues 110–131 (RMKYVYFQNNQITAIQEGAFDN), 134–147 (ELEWLALHNNQISS), 160–180 (NLERLYMNNNNLTKMPSPLPR), 181–202 (SLRELHLSYNQISKVPSNALEG), 205–227 (NLTALYLSHNYIFEMGASLKGLK), 228–248 (SLILADLSYNHLRKVPDGLPM), 249–270 (ALEQLYLEYNYINAIPDDYFKV), and 273–293 (KLLYVRMSHNSLTNQGLSTNT). N-linked (GlcNAc...) (keratan sulfate) asparagine glycosylation is present at Asn-131. Residue Asn-170 is glycosylated (N-linked (GlcNAc...) (keratan sulfate) asparagine). N-linked (GlcNAc...) (keratan sulfate) asparagine glycosylation is present at Asn-205. The N-linked (GlcNAc...) (keratan sulfate) asparagine glycan is linked to Asn-295. LRR repeat units follow at residues 298–317 (SILELDLSYNRLQKIPRVST) and 318–339 (NLENLYLQGNQINEFSISSFCT). A disulfide bridge connects residues Cys-338 and Cys-371. N-linked (GlcNAc...) asparagine glycosylation is present at Asn-345. Residues 348-371 (RLQVLRLDGNEIKRNAMPPDAPLC) form an LRR 11 repeat.

This sequence belongs to the small leucine-rich proteoglycan (SLRP) family. SLRP class II subfamily. Binds to type I and type II collagen. Post-translationally, binds keratan sulfate chains.

Its subcellular location is the secreted. It is found in the extracellular space. The protein localises to the extracellular matrix. Its function is as follows. Affects the rate of fibrils formation. May have a primary role in collagen fibrillogenesis. The protein is Fibromodulin (FMOD) of Gallus gallus (Chicken).